The sequence spans 295 residues: Protease HtpX (295 aa).

Transmembrane regions (helical) follow at residues 4 to 24 (ILLF…TLSL) and 41 to 61 (SQLL…SLFI). Residue histidine 147 coordinates Zn(2+). Glutamate 148 is a catalytic residue. Histidine 151 serves as a coordination point for Zn(2+). The next 2 helical transmembrane spans lie at 158-178 (VTLA…ARII) and 199-219 (IATI…VMWF). Glutamate 224 contributes to the Zn(2+) binding site.

It belongs to the peptidase M48B family. Zn(2+) serves as cofactor.

It localises to the cell inner membrane. This is Protease HtpX from Pseudomonas fluorescens (strain Pf0-1).